A 295-amino-acid polypeptide reads, in one-letter code: Protein shisa-2 homolog (295 aa).

The signal sequence occupies residues Met1–Ala33. Over Ser34 to Ser110 the chain is Extracellular. Residues Gly87 to Asp108 are disordered. A helical membrane pass occupies residues Ala111–Leu131. The Cytoplasmic portion of the chain corresponds to Gly132–Val295. The interval Pro168–Asn205 is disordered. The span at Ser169–Ala197 shows a compositional bias: low complexity.

This sequence belongs to the shisa family.

It localises to the endoplasmic reticulum membrane. Functionally, plays an essential role in the maturation of presomitic mesoderm cells by individual attenuation of both FGF and WNT signaling. The polypeptide is Protein shisa-2 homolog (SHISA2) (Homo sapiens (Human)).